Reading from the N-terminus, the 741-residue chain is Cellulose 1,4-beta-cellobiosidase (reducing end) CelS (741 aa).

Residues 1–27 form the signal peptide; the sequence is MVKSRKISILLAVAMLVSIMIPTTAFA. E76 lines the substrate pocket. E87 acts as the Proton donor in catalysis. Residues T140, N204, D241, Q247, and 251 to 252 each bind substrate; that span reads TN. Residue D255 is the Nucleophile of the active site. Substrate contacts are provided by residues 301–302, 326–327, Y421, D520, and 645–646; these read KY, WY, and WH. A Dockerin domain is found at 673–739; it reads STKLYGDVND…ILKEIDTLPY (67 aa). Ca(2+) contacts are provided by D679, N681, D683, G684, K685, D690, D711, L712, N713, D715, R717, and D722.

This sequence belongs to the glycosyl hydrolase 48 (cellulase L) family.

The protein localises to the secreted. It catalyses the reaction Hydrolysis of (1-&gt;4)-beta-D-glucosidic linkages in cellulose and similar substrates, releasing cellobiose from the reducing ends of the chains.. Its activity is regulated as follows. Inhibited by cellobiose and lactose, but not by glucose. In terms of biological role, this enzyme catalyzes the exohydrolysis of 1,4-beta-glucosidic linkages in cellulose with a preference for amorphous or crystalline cellulose over carboxymethyl cellulose. This chain is Cellulose 1,4-beta-cellobiosidase (reducing end) CelS (celS), found in Acetivibrio thermocellus (strain ATCC 27405 / DSM 1237 / JCM 9322 / NBRC 103400 / NCIMB 10682 / NRRL B-4536 / VPI 7372) (Clostridium thermocellum).